Consider the following 129-residue polypeptide: D-ribose pyranase (129 aa).

His-20 acts as the Proton donor in catalysis. Residues Asp-28, His-96, and 118-120 (YAN) each bind substrate.

This sequence belongs to the RbsD / FucU family. RbsD subfamily. Homodecamer.

Its subcellular location is the cytoplasm. It catalyses the reaction beta-D-ribopyranose = beta-D-ribofuranose. It participates in carbohydrate metabolism; D-ribose degradation; D-ribose 5-phosphate from beta-D-ribopyranose: step 1/2. Its function is as follows. Catalyzes the interconversion of beta-pyran and beta-furan forms of D-ribose. The polypeptide is D-ribose pyranase (Shouchella clausii (strain KSM-K16) (Alkalihalobacillus clausii)).